A 222-amino-acid polypeptide reads, in one-letter code: Charged multivesicular body protein 3 (222 aa).

Residue Gly-2 is the site of N-myristoyl glycine attachment. Residues 2–113 (GLFGKTQEKP…LQKSTEVMKA (112 aa)) form an intramolecular interaction with C-terminus region. Residues 22-54 (KIRKEMRVVDRQIRDIQREEEKVKRSVKDAAKK) adopt a coiled-coil conformation. 2 important for autoinhibitory function regions span residues 59–64 (VCIVLA) and 168–169 (IL). Residues 141–222 (EEMLEDTFES…MQSRLATLRS (82 aa)) adopt a coiled-coil conformation. Positions 151–220 (MDDQEEMEEE…EAMQSRLATL (70 aa)) are intramolecular interaction with N-terminus. Residues 151 to 222 (MDDQEEMEEE…MQSRLATLRS (72 aa)) are interaction with VPS4A. Lys-179 participates in a covalent cross-link: Glycyl lysine isopeptide (Lys-Gly) (interchain with G-Cter in ubiquitin). Positions 180-222 (APSKVTDALPEPEPPGAMAASEDEEEEEEALEAMQSRLATLRS) are disordered. At Ser-200 the chain carries Phosphoserine. The segment covering 200–210 (SEDEEEEEEAL) has biased composition (acidic residues). The short motif at 201-211 (EDEEEEEEALE) is the MIT-interacting motif element. 2 interaction with STAMBP regions span residues 203–207 (EEEEE) and 221–222 (RS).

It belongs to the SNF7 family. Probable core component of the endosomal sorting required for transport complex III (ESCRT-III). ESCRT-III components are thought to multimerize to form a flat lattice on the perimeter membrane of the endosome. Several assembly forms of ESCRT-III may exist that interact and act sequentially. Forms a metastable monomer in solution; its core structure (without part of the putative autoinhibitory C-terminal acidic region) oligomerizes into a flat lattice via two different dimerization interfaces. In vitro, heteromerizes with CHMP2A (but not CHMP4) to form helical tubular structures that expose membrane-interacting sites on the outside whereas VPS4B can associate on the inside of the tubule. May interact with IGFBP7; the relevance of such interaction however remains unclear. Interacts with CHMP2A. Interacts with CHMP4A; the interaction requires the release of CHMP4A autoinhibition. Interacts with VPS4A. Interacts with STAMBP; the interaction appears to relieve the autoinhibition of CHMP3. Interacts with VTA1. In terms of tissue distribution, widely expressed. Expressed in heart, brain, placenta, lung, liver, skeletal muscle, kidney and pancreas.

The protein localises to the cytoplasm. It localises to the cytosol. It is found in the membrane. Its subcellular location is the endosome. The protein resides in the late endosome membrane. In terms of biological role, probable core component of the endosomal sorting required for transport complex III (ESCRT-III) which is involved in multivesicular bodies (MVBs) formation and sorting of endosomal cargo proteins into MVBs. MVBs contain intraluminal vesicles (ILVs) that are generated by invagination and scission from the limiting membrane of the endosome and mostly are delivered to lysosomes enabling degradation of membrane proteins, such as stimulated growth factor receptors, lysosomal enzymes and lipids. The MVB pathway appears to require the sequential function of ESCRT-O, -I,-II and -III complexes. ESCRT-III proteins mostly dissociate from the invaginating membrane before the ILV is released. The ESCRT machinery also functions in topologically equivalent membrane fission events, such as the terminal stages of cytokinesis and the budding of enveloped viruses (HIV-1 and other lentiviruses). ESCRT-III proteins are believed to mediate the necessary vesicle extrusion and/or membrane fission activities, possibly in conjunction with the AAA ATPase VPS4. Selectively binds to phosphatidylinositol 3,5-bisphosphate PtdIns(3,5)P2 and PtdIns(3,4)P2 in preference to other phosphoinositides tested. Involved in late stages of cytokinesis. Plays a role in endosomal sorting/trafficking of EGF receptor. Isoform 2 prevents stress-mediated cell death and accumulation of reactive oxygen species when expressed in yeast cells. The sequence is that of Charged multivesicular body protein 3 (CHMP3) from Homo sapiens (Human).